The sequence spans 451 residues: Probable phosphoglucosamine mutase (451 aa).

Serine 96 serves as the catalytic Phosphoserine intermediate. Serine 96, aspartate 233, aspartate 235, and aspartate 237 together coordinate Mg(2+). Residue serine 96 is modified to Phosphoserine.

The protein belongs to the phosphohexose mutase family. Mg(2+) serves as cofactor. Post-translationally, activated by phosphorylation.

The enzyme catalyses alpha-D-glucosamine 1-phosphate = D-glucosamine 6-phosphate. Its function is as follows. Catalyzes the conversion of glucosamine-6-phosphate to glucosamine-1-phosphate. This Pyrococcus abyssi (strain GE5 / Orsay) protein is Probable phosphoglucosamine mutase.